The chain runs to 179 residues: Large ribosomal subunit protein uL6 (179 aa).

The protein belongs to the universal ribosomal protein uL6 family. Part of the 50S ribosomal subunit.

Its function is as follows. This protein binds to the 23S rRNA, and is important in its secondary structure. It is located near the subunit interface in the base of the L7/L12 stalk, and near the tRNA binding site of the peptidyltransferase center. The protein is Large ribosomal subunit protein uL6 of Mycolicibacterium gilvum (strain PYR-GCK) (Mycobacterium gilvum (strain PYR-GCK)).